Here is a 228-residue protein sequence, read N- to C-terminus: Urease accessory protein UreF 1 (228 aa).

The protein belongs to the UreF family. In terms of assembly, ureD, UreF and UreG form a complex that acts as a GTP-hydrolysis-dependent molecular chaperone, activating the urease apoprotein by helping to assemble the nickel containing metallocenter of UreC. The UreE protein probably delivers the nickel.

The protein localises to the cytoplasm. Required for maturation of urease via the functional incorporation of the urease nickel metallocenter. In Brucella canis (strain ATCC 23365 / NCTC 10854 / RM-666), this protein is Urease accessory protein UreF 1.